Here is a 491-residue protein sequence, read N- to C-terminus: Probable folate-biopterin transporter 4 (491 aa).

6 helical membrane passes run 14-34, 52-72, 84-104, 112-132, 154-174, and 179-199; these read VAFL…SFVW, SQFV…YGII, TPYL…LGLD, LYLM…DVVI, VSWF…GYAL, and IETI…SCAL. The interval 222–262 is disordered; the sequence is KSLTSNDNYPDTSKSNTRRRKGQKKGKKGDSNGKSETQKKQ. Positions 224–236 are enriched in polar residues; the sequence is LTSNDNYPDTSKS. A compositionally biased stretch (basic residues) spans 237–248; that stretch reads NTRRRKGQKKGK. Residues 249-260 are compositionally biased toward basic and acidic residues; the sequence is KGDSNGKSETQK. Transmembrane regions (helical) follow at residues 294 to 314, 323 to 343, 356 to 376, 389 to 411, 437 to 457, and 461 to 481; these read MAWF…MFYY, AAFL…GTFI, SLLF…VLVS, MVLF…FLIL, TVGS…SGSF, and FMGL…LFLI.

Belongs to the major facilitator superfamily. Folate-biopterin transporter (TC 2.A.71) family.

Its subcellular location is the membrane. Functionally, could mediate folate transport. This Arabidopsis thaliana (Mouse-ear cress) protein is Probable folate-biopterin transporter 4.